The following is a 443-amino-acid chain: tRNA modification GTPase MnmE (443 aa).

(6S)-5-formyl-5,6,7,8-tetrahydrofolate contacts are provided by R23, E82, and K121. The TrmE-type G domain occupies 215–364; sequence GTSIVLAGHP…LKQFIQKWIQ (150 aa). N225 serves as a coordination point for K(+). GTP contacts are provided by residues 225 to 230, 244 to 250, and 269 to 272; these read NAGKSS, TDIPGTT, and DSAG. S229 provides a ligand contact to Mg(2+). K(+)-binding residues include T244, I246, and T249. T250 provides a ligand contact to Mg(2+). Position 443 (K443) interacts with (6S)-5-formyl-5,6,7,8-tetrahydrofolate.

This sequence belongs to the TRAFAC class TrmE-Era-EngA-EngB-Septin-like GTPase superfamily. TrmE GTPase family. As to quaternary structure, homodimer. Heterotetramer of two MnmE and two MnmG subunits. K(+) is required as a cofactor.

Its subcellular location is the cytoplasm. Functionally, exhibits a very high intrinsic GTPase hydrolysis rate. Involved in the addition of a carboxymethylaminomethyl (cmnm) group at the wobble position (U34) of certain tRNAs, forming tRNA-cmnm(5)s(2)U34. The sequence is that of tRNA modification GTPase MnmE from Chlamydia felis (strain Fe/C-56) (Chlamydophila felis).